A 498-amino-acid polypeptide reads, in one-letter code: ADP,ATP carrier protein 1 (498 aa).

At 1 to 33 the chain is on the cytoplasmic side; the sequence is MSTTKSDNYISELRKVIWPIERYENKKFLPMAF. The chain crosses the membrane as a helical span at residues 34–54; sequence MMFCILLNYSTLRSIKDGFVV. Cys-37 and Cys-85 form a disulfide bridge. The Extracellular segment spans residues 55–67; sequence TDIGAEAISFLKT. A helical transmembrane segment spans residues 68–88; sequence YIVLPSAVIAMIVYVKLCDIL. Residues 89–92 are Cytoplasmic-facing; it reads KQEN. Residues 93-113 traverse the membrane as a helical segment; it reads VFYVITSFFLAYFALFAFVLY. Over 114 to 147 the chain is Extracellular; sequence PNPDLVHPNPEAIESLSLAYPNFKWFIRIVGKWS. Residues 148–168 form a helical membrane-spanning segment; that stretch reads FASFYTMAELWGTLMLSLLFW. The Cytoplasmic portion of the chain corresponds to 169 to 184; sequence QFANQITKTDEAKRFY. Residues 185 to 205 form a helical membrane-spanning segment; the sequence is SMFGLLANLALPVTSLIIGYF. Over 206 to 218 the chain is Extracellular; that stretch reads LHEKTQIVAEHLK. The helical transmembrane segment at 219 to 239 threads the bilayer; that stretch reads FTPLFVIMIISSLAVILTYRW. Residues 240–279 are Cytoplasmic-facing; sequence MNKNVLTDPKLYDPALVKGKKAKAKMSLIESFKMIFTSKY. A helical membrane pass occupies residues 280 to 300; sequence VGYIALLLIAYGISVNLVEGV. Topologically, residues 301–320 are extracellular; the sequence is WKSKLKELHPTKEAYTMYMG. Residues 321–341 form a helical membrane-spanning segment; the sequence is QFQAYQGWVAIAFMIIGSNIL. At 342–348 the chain is on the cytoplasmic side; that stretch reads RKVSWLT. The chain crosses the membrane as a helical span at residues 349–369; it reads AAMITPLMMLITGIAFFAFIF. The Extracellular segment spans residues 370 to 379; the sequence is FDSVIAMYLT. The helical transmembrane segment at 380–400 threads the bilayer; that stretch reads GILASGPLALAVMIGTIQNVL. At 401-438 the chain is on the cytoplasmic side; that stretch reads SKGVKYSLFDATKNMAYIPLDKDLRVKGQAAVEVIGGR. Residue 436 to 442 coordinates ATP; sequence GGRFGKS. Residues 439–459 traverse the membrane as a helical segment; that stretch reads FGKSGGAIIQSTFFIIFPALG. Over 460–465 the chain is Extracellular; the sequence is FVEATP. A helical transmembrane segment spans residues 466–486; the sequence is YFASIFFVIVILWIYAVKGLN. The Cytoplasmic segment spans residues 487–498; it reads KEYQVLVNNTEK.

The protein belongs to the ADP/ATP translocase tlc family.

It is found in the cell membrane. Its function is as follows. Provides the rickettsial cell with host ATP in exchange for rickettsial ADP. This is an obligate exchange system. This energy acquiring activity is an important component of rickettsial parasitism. In Rickettsia bellii (strain RML369-C), this protein is ADP,ATP carrier protein 1 (tlcA).